The primary structure comprises 159 residues: Urease accessory protein UreE (159 aa).

Belongs to the UreE family.

It is found in the cytoplasm. Its function is as follows. Involved in urease metallocenter assembly. Binds nickel. Probably functions as a nickel donor during metallocenter assembly. The polypeptide is Urease accessory protein UreE (Vibrio parahaemolyticus).